Here is a 37-residue protein sequence, read N- to C-terminus: Potassium channel toxin alpha-KTx 3.13 (37 aa).

Cystine bridges form between cysteine 7–cysteine 27, cysteine 13–cysteine 32, and cysteine 17–cysteine 34. Lysine 37 is modified (lysine amide).

The protein belongs to the short scorpion toxin superfamily. Potassium channel inhibitor family. Alpha-KTx 03 subfamily. In terms of tissue distribution, expressed by the venom gland.

The protein resides in the secreted. In terms of biological role, blocks voltage-gated potassium channels Kv1.1/KCNA1 (IC(50)=203.15 pM), Kv1.2/KCNA2 (IC(50)=8.92 nM) from rat and human Kv1.3 KCNA3/KCNA3 (IC(50)=171 pM) potently. At 2 uM, also blocks Shaker IR and has a moderate effect on rat Kv1.6/KCNA6. In Mesobuthus eupeus (Lesser Asian scorpion), this protein is Potassium channel toxin alpha-KTx 3.13.